Reading from the N-terminus, the 358-residue chain is Uptake hydrogenase small subunit (358 aa).

The first 45 residues, 1–45 (MSDIETFYDVMRRQGITRRSFMKSVRSPQHVLGLGPSFVPKIGEA), serve as a signal peptide directing secretion. Cys62, Cys65, Cys160, Cys194, His232, Cys235, Cys260, and Cys266 together coordinate [4Fe-4S] cluster. 3 residues coordinate [3Fe-4S] cluster: Cys275, Cys294, and Cys297.

Belongs to the [NiFe]/[NiFeSe] hydrogenase small subunit family. As to quaternary structure, heterodimer of a large and a small subunit. [4Fe-4S] cluster is required as a cofactor. It depends on [3Fe-4S] cluster as a cofactor.

It localises to the cell membrane. It carries out the reaction H2 + A = AH2. In terms of biological role, this enzyme recycles the H(2) produced by nitrogenase to increase the production of ATP and to protect nitrogenase against inhibition or damage by O(2) under carbon- or phosphate-limited conditions. The protein is Uptake hydrogenase small subunit (hupA) of Rhodobacter capsulatus (Rhodopseudomonas capsulata).